A 264-amino-acid chain; its full sequence is Phycocyanobilin:ferredoxin oxidoreductase (264 aa).

It belongs to the HY2 family.

The catalysed reaction is (2R,3Z)-phycocyanobilin + 4 oxidized [2Fe-2S]-[ferredoxin] = biliverdin IXalpha + 4 reduced [2Fe-2S]-[ferredoxin] + 4 H(+). Its function is as follows. Catalyzes the four-electron reduction of biliverdin IX-alpha (2-electron reduction at both the A and D rings); the reaction proceeds via an isolatable 2-electron intermediate, 181,182-dihydrobiliverdin. In Prochlorococcus marinus (strain MIT 9303), this protein is Phycocyanobilin:ferredoxin oxidoreductase.